The chain runs to 321 residues: Genome polyprotein (321 aa).

Over 1–52 the chain is Cytoplasmic; it reads RNLGKVIDTLTCGFADLMGYIPLVGAPLGGAARALAHGVRVLEDGVNYATGN. The tract at residues 6–57 is interaction with APOA2; sequence VIDTLTCGFADLMGYIPLVGAPLGGAARALAHGVRVLEDGVNYATGNLPGCS. Positions 48 to 51 are important for lipid droplets localization; sequence YATG. The helical transmembrane segment at 53 to 73 threads the bilayer; the sequence is LPGCSFSLFLLALLSCLTVPA. Residues 62–75 constitute a propeptide, ER anchor for the core protein, removed in mature form by host signal peptidase; the sequence is LLALLSCLTVPASA. The Lumenal portion of the chain corresponds to 74–242; the sequence is SAYQVRNSTG…AGAHWGVLAG (169 aa). Residues N80, N93, and N118 are each glycosylated (N-linked (GlcNAc...) asparagine; by host). An important for fusion region spans residues 149 to 180; sequence LVGSATLCSALYVGDLCGSIFLVGQLFTFSPR. The N-linked (GlcNAc...) asparagine; by host glycan is linked to N189. Residues 243–263 form a helical membrane-spanning segment; that stretch reads IAYFSMVGNWAKVLVVLLLFA. The Lumenal segment spans residues 264-321; that stretch reads GVDAETTVTGGSAAHGALGIASLFNQGARQNIQLINTNGSWHINSTALNCNDSLNTGW. The HVR1 stretch occupies residues 268–294; sequence ETTVTGGSAAHGALGIASLFNQGARQN. Residues N301, N307, and N314 are each glycosylated (N-linked (GlcNAc...) (high mannose) asparagine; by host).

Belongs to the hepacivirus polyprotein family. In terms of assembly, homooligomer. Interacts with E1 (via C-terminus). Interacts with the non-structural protein 5A. Interacts (via N-terminus) with host STAT1 (via SH2 domain); this interaction results in decreased STAT1 phosphorylation and ubiquitin-mediated proteasome-dependent STAT1 degradation, leading to decreased IFN-stimulated gene transcription. Interacts with host STAT3; this interaction constitutively activates STAT3. Interacts with host LTBR receptor. Interacts with host TNFRSF1A receptor and possibly induces apoptosis. Interacts with host HNRPK. Interacts with host YWHAE. Interacts with host UBE3A/E6AP. Interacts with host DDX3X. Interacts with host APOA2. Interacts with host RXRA protein. Interacts with host SP110 isoform 3/Sp110b; this interaction sequesters the transcriptional corepressor SP110 away from the nucleus. Interacts with host CREB3 nuclear transcription protein; this interaction triggers cell transformation. Interacts with host ACY3. Interacts with host C1QR1. Interacts with host RBM24; this interaction, which enhances the interaction of the mature core protein with 5'-UTR, may inhibit viral translation and favor replication. Interacts with host EIF2AK2/PKR; this interaction induces the autophosphorylation of EIF2AK2. Part of the viral assembly initiation complex composed of NS2, E1, E2, NS3, NS4A, NS5A and the mature core protein. As to quaternary structure, forms a heterodimer with envelope glycoprotein E2. Interacts with mature core protein. Interacts with protease NS2. The heterodimer E1/E2 interacts with host CLDN1; this interaction plays a role in viral entry into host cell. Interacts with host SPSB2 (via C-terminus). Part of the viral assembly initiation complex composed of NS2, E1, E2, NS3, NS4A, NS5A and the mature core protein. Forms a heterodimer with envelope glycoprotein E1. Interacts with host CD81 and SCARB1 receptors; these interactions play a role in viral entry into host cell. Interacts with host EIF2AK2/PKR; this interaction inhibits EIF2AK2 and probably allows the virus to evade the innate immune response. Interacts with host CD209/DC-SIGN and CLEC4M/DC-SIGNR. Interact with host SPCS1; this interaction is essential for viral particle assembly. Interacts with protease NS2. The heterodimer E1/E2 interacts with host CLDN1; this interaction plays a role in viral entry into host cell. Part of the viral assembly initiation complex composed of NS2, E1, E2, NS3, NS4A, NS5A and the mature core protein. Specific enzymatic cleavages in vivo yield mature proteins. The structural proteins, core, E1, E2 and p7 are produced by proteolytic processing by host signal peptidases. The core protein precursor is synthesized as a 23 kDa, which is retained in the ER membrane through the hydrophobic signal peptide. Cleavage by the signal peptidase releases the 21 kDa mature core protein. The cleavage of the core protein precursor occurs between aminoacids 176 and 188 but the exact cleavage site is not known. Some degraded forms of the core protein appear as well during the course of infection. The other proteins (p7, NS2, NS3, NS4A, NS4B, NS5A and NS5B) are cleaved by the viral proteases. Autoprocessing between NS2 and NS3 is mediated by the NS2 cysteine protease catalytic domain and regulated by the NS3 N-terminal domain. Post-translationally, phosphorylated by host PKC and PKA. In terms of processing, ubiquitinated; mediated by UBE3A and leading to core protein subsequent proteasomal degradation. Highly N-glycosylated.

The protein localises to the host endoplasmic reticulum membrane. It is found in the host mitochondrion membrane. The protein resides in the virion. It localises to the host cytoplasm. Its subcellular location is the host nucleus. The protein localises to the host lipid droplet. It is found in the virion membrane. Functionally, packages viral RNA to form a viral nucleocapsid, and promotes virion budding. Participates in the viral particle production as a result of its interaction with the non-structural protein 5A. Binds RNA and may function as a RNA chaperone to induce the RNA structural rearrangements taking place during virus replication. Modulates viral translation initiation by interacting with viral IRES and 40S ribosomal subunit. Affects various cell signaling pathways, host immunity and lipid metabolism. Prevents the establishment of cellular antiviral state by blocking the interferon-alpha/beta (IFN-alpha/beta) and IFN-gamma signaling pathways and by blocking the formation of phosphorylated STAT1 and promoting ubiquitin-mediated proteasome-dependent degradation of STAT1. Activates STAT3 leading to cellular transformation. Regulates the activity of cellular genes, including c-myc and c-fos. May repress the promoter of p53, and sequester CREB3 and SP110 isoform 3/Sp110b in the cytoplasm. Represses cell cycle negative regulating factor CDKN1A, thereby interrupting an important check point of normal cell cycle regulation. Targets transcription factors involved in the regulation of inflammatory responses and in the immune response: suppresses TNF-induced NF-kappa-B activation, and activates AP-1. Binds to dendritic cells (DCs) via C1QR1, resulting in down-regulation of T-lymphocytes proliferation. Alters lipid metabolism by interacting with hepatocellular proteins involved in lipid accumulation and storage. Induces up-regulation of FAS promoter activity, and thereby contributes to the increased triglyceride accumulation in hepatocytes (steatosis). In terms of biological role, forms a heterodimer with envelope glycoprotein E2, which mediates virus attachment to the host cell, virion internalization through clathrin-dependent endocytosis and fusion with host membrane. Fusion with the host cell is most likely mediated by both E1 and E2, through conformational rearrangements of the heterodimer required for fusion rather than a classical class II fusion mechanism. E1/E2 heterodimer binds host apolipoproteins such as APOB and ApoE thereby forming a lipo-viro-particle (LVP). APOE associated to the LVP allows the initial virus attachment to cell surface receptors such as the heparan sulfate proteoglycans (HSPGs), syndecan-1 (SDC1), syndecan-1 (SDC2), the low-density lipoprotein receptor (LDLR) and scavenger receptor class B type I (SCARB1). The cholesterol transfer activity of SCARB1 allows E2 exposure and binding of E2 to SCARB1 and the tetraspanin CD81. E1/E2 heterodimer binding on CD81 activates the epithelial growth factor receptor (EGFR) signaling pathway. Diffusion of the complex E1-E2-EGFR-SCARB1-CD81 to the cell lateral membrane allows further interaction with Claudin 1 (CLDN1) and occludin (OCLN) to finally trigger HCV entry. Forms a heterodimer with envelope glycoprotein E1, which mediates virus attachment to the host cell, virion internalization through clathrin-dependent endocytosis and fusion with host membrane. Fusion with the host cell is most likely mediated by both E1 and E2, through conformational rearrangements of the heterodimer required for fusion rather than a classical class II fusion mechanism. The interaction between envelope glycoprotein E2 and host apolipoprotein E/APOE allows the proper assembly, maturation and infectivity of the viral particles. This interaction is probably promoted via the up-regulation of cellular autophagy by the virus. E1/E2 heterodimer binds host apolipoproteins such as APOB and APOE thereby forming a lipo-viro-particle (LVP). APOE associated to the LVP allows the initial virus attachment to cell surface receptors such as the heparan sulfate proteoglycans (HSPGs), syndecan-1 (SDC1), syndecan-1 (SDC2), the low-density lipoprotein receptor (LDLR) and scavenger receptor class B type I (SCARB1). The cholesterol transfer activity of SCARB1 allows E2 exposure and binding of E2 to SCARB1 and the tetraspanin CD81. E1/E2 heterodimer binding on CD81 activates the epithelial growth factor receptor (EGFR) signaling pathway. Diffusion of the complex E1-E2-EGFR-SCARB1-CD81 to the cell lateral membrane allows further interaction with Claudin 1 (CLDN1) and occludin (OCLN) to finally trigger HCV entry. Inhibits host EIF2AK2/PKR activation, preventing the establishment of an antiviral state. Viral ligand for CD209/DC-SIGN and CLEC4M/DC-SIGNR, which are respectively found on dendritic cells (DCs), and on liver sinusoidal endothelial cells and macrophage-like cells of lymph node sinuses. These interactions allow the capture of circulating HCV particles by these cells and subsequent facilitated transmission to permissive cells such as hepatocytes and lymphocyte subpopulations. The chain is Genome polyprotein from Homo sapiens (Human).